The primary structure comprises 426 residues: Serine--tRNA ligase (426 aa).

233-235 (TAE) contributes to the L-serine binding site. 264-266 (RAE) provides a ligand contact to ATP. L-serine is bound at residue E287. ATP is bound at residue 351–354 (EISS). L-serine is bound at residue S387.

It belongs to the class-II aminoacyl-tRNA synthetase family. Type-1 seryl-tRNA synthetase subfamily. In terms of assembly, homodimer. The tRNA molecule binds across the dimer.

The protein localises to the cytoplasm. The enzyme catalyses tRNA(Ser) + L-serine + ATP = L-seryl-tRNA(Ser) + AMP + diphosphate + H(+). The catalysed reaction is tRNA(Sec) + L-serine + ATP = L-seryl-tRNA(Sec) + AMP + diphosphate + H(+). Its pathway is aminoacyl-tRNA biosynthesis; selenocysteinyl-tRNA(Sec) biosynthesis; L-seryl-tRNA(Sec) from L-serine and tRNA(Sec): step 1/1. Its function is as follows. Catalyzes the attachment of serine to tRNA(Ser). Is also able to aminoacylate tRNA(Sec) with serine, to form the misacylated tRNA L-seryl-tRNA(Sec), which will be further converted into selenocysteinyl-tRNA(Sec). This is Serine--tRNA ligase from Clostridium novyi (strain NT).